A 94-amino-acid polypeptide reads, in one-letter code: Integration host factor subunit beta (94 aa).

This sequence belongs to the bacterial histone-like protein family. Heterodimer of an alpha and a beta chain.

In terms of biological role, this protein is one of the two subunits of integration host factor, a specific DNA-binding protein that functions in genetic recombination as well as in transcriptional and translational control. The polypeptide is Integration host factor subunit beta (Dechloromonas aromatica (strain RCB)).